We begin with the raw amino-acid sequence, 148 residues long: Snaclec B3/B5 (148 aa).

The N-terminal stretch at 1–24 (MGRFIFVSFGLLVVFLSLSGTGAA) is a signal peptide. 3 disulfide bridges follow: Cys27–Cys38, Cys55–Cys144, and Cys121–Cys136. The 112-residue stretch at 34–145 (YDQHCYKVFD…CRLLGHFVCK (112 aa)) folds into the C-type lectin domain.

This sequence belongs to the snaclec family. In terms of assembly, heterodimer; disulfide-linked. Expressed by the venom gland.

Its subcellular location is the secreted. Functionally, interferes with one step of hemostasis (modulation of platelet aggregation, or coagulation cascade, for example). The protein is Snaclec B3/B5 of Macrovipera lebetinus (Levantine viper).